Reading from the N-terminus, the 1005-residue chain is Negative regulator of pleiotropic drug resistance STB5 (1005 aa).

The segment at 1–28 is disordered; that stretch reads MSGPDKGSDSGQTANDPKQKKARNGQME. Residues 32–59 constitute a DNA-binding region (zn(2)-C6 fungal-type); that stretch reads CARCRKLKKKCPRQLPECSNCLKAREPC. Disordered stretches follow at residues 129-151, 666-693, and 763-831; these read GGEQ…SINR, KGKS…EDVK, and TKPT…SSLR. The segment covering 673-693 has biased composition (basic and acidic residues); the sequence is KRFEKSKESDSDRGVTEEDVK. Over residues 763-773 the composition is skewed to polar residues; that stretch reads TKPTANIMNDQ. The span at 792–801 shows a compositional bias: basic and acidic residues; it reads EGPKSLKEGN.

The protein resides in the nucleus. Its function is as follows. Transcription factor that negatively regulates pleiotropic drug resistance genes, including the ABC transporter genes CDR1, PDH1, and YOR1. In Candida glabrata (strain ATCC 2001 / BCRC 20586 / JCM 3761 / NBRC 0622 / NRRL Y-65 / CBS 138) (Yeast), this protein is Negative regulator of pleiotropic drug resistance STB5.